The primary structure comprises 431 residues: Enolase (431 aa).

Residue Gln167 participates in (2R)-2-phosphoglycerate binding. Glu209 serves as the catalytic Proton donor. Positions 246, 290, and 316 each coordinate Mg(2+). Residues Lys341, Arg370, Ser371, and Lys392 each coordinate (2R)-2-phosphoglycerate. Catalysis depends on Lys341, which acts as the Proton acceptor.

It belongs to the enolase family. As to quaternary structure, component of the RNA degradosome, a multiprotein complex involved in RNA processing and mRNA degradation. It depends on Mg(2+) as a cofactor.

Its subcellular location is the cytoplasm. It localises to the secreted. The protein resides in the cell surface. It carries out the reaction (2R)-2-phosphoglycerate = phosphoenolpyruvate + H2O. It functions in the pathway carbohydrate degradation; glycolysis; pyruvate from D-glyceraldehyde 3-phosphate: step 4/5. Its function is as follows. Catalyzes the reversible conversion of 2-phosphoglycerate (2-PG) into phosphoenolpyruvate (PEP). It is essential for the degradation of carbohydrates via glycolysis. The chain is Enolase from Shigella flexneri serotype 5b (strain 8401).